A 436-amino-acid polypeptide reads, in one-letter code: Magnesium transporter MRS2-B (436 aa).

2 stretches are compositionally biased toward low complexity: residues Met1–Ala14 and Val29–Gly54. Residues Met1–Leu60 are disordered. A coiled-coil region spans residues Leu176–Asp242. The next 2 membrane-spanning stretches (helical) occupy residues Leu372–Gly392 and Trp408–Phe428. Positions Gly392–Asn394 match the Required for magnesium transport activity motif.

It belongs to the CorA metal ion transporter (MIT) (TC 1.A.35.5) family.

The protein resides in the membrane. Magnesium transporter that may mediate the influx of magnesium. This chain is Magnesium transporter MRS2-B (MRS2-B), found in Oryza sativa subsp. indica (Rice).